We begin with the raw amino-acid sequence, 321 residues long: 2-oxoglutarate-dependent dioxygenase frbH (321 aa).

The disordered stretch occupies residues 77–97; it reads SRNSDTHGYEPVATSTGAQDD. One can recognise a Fe2OG dioxygenase domain in the interval 169–273; that stretch reads ESLSTLSMFR…RFSIAYFLRA (105 aa). Positions 194, 196, and 251 each coordinate Fe cation. Arginine 264 provides a ligand contact to 2-oxoglutarate.

This sequence belongs to the iron/ascorbate-dependent oxidoreductase family.

Its pathway is antifungal biosynthesis. In terms of biological role, 2-oxoglutarate-dependent dioxygenase; part of the gene cluster that mediates the biosynthesis of the antifungal antibiotic FR901469, an inhibitor of beta-1,3-glucansynthase, exerting antifungal activity against the pathogenes Candida albicans and Aspergillus fumigatus. FR901469 is a cyclic depsipeptide containing 12 amino acid residues and a fatty acid chain. The NRPS frbI contains 12 modules responsible for the formation of the depsipeptide backbone which is denoted as Acyl-Thr-Ala-Tyr-Val-4OHPro-Thr-Thr-3OHPro-threo3OHGln-Gly-Thr-Orn-OH (C71H116N14O23). The PKS frbB is probably involved in the production of the hydrocarbon chain, and the acyl-CoA ligase frbC might be involved in the transport of the chain to the peptide ptoduct of frbI. Because FR901469 contains 3 hydroxylated amino acid residues, the 3 oxygenases frbA, frbH, and frbJ might be participating in amino acid hydroxylation. As no thioesterase domains were detected in frbI or frbB, the thioesterases frbD and frbE may instead release and cyclize the products of the NRPS and PKS, respectively. The polypeptide is 2-oxoglutarate-dependent dioxygenase frbH (Dothideomycetidae sp. (strain 11243) (Fungal sp. (strain No.11243))).